Here is a 220-residue protein sequence, read N- to C-terminus: Putative glutathione S-transferase C1183.02 (220 aa).

The GST N-terminal domain maps to 2-81 (FLGTLYSFKT…YFYEKGKHND (80 aa)). One can recognise a GST C-terminal domain in the interval 89-216 (NEVEEAEMLK…FPLELPLTVT (128 aa)).

Belongs to the GST superfamily.

Its subcellular location is the cytoplasm. The catalysed reaction is RX + glutathione = an S-substituted glutathione + a halide anion + H(+). In terms of biological role, involved in the oxidative stress response and detoxification. This Schizosaccharomyces pombe (strain 972 / ATCC 24843) (Fission yeast) protein is Putative glutathione S-transferase C1183.02.